Here is a 415-residue protein sequence, read N- to C-terminus: Light-independent protochlorophyllide reductase subunit N (415 aa).

3 residues coordinate [4Fe-4S] cluster: C16, C41, and C98.

It belongs to the BchN/ChlN family. As to quaternary structure, protochlorophyllide reductase is composed of three subunits; BchL, BchN and BchB. Forms a heterotetramer of two BchB and two BchN subunits. It depends on [4Fe-4S] cluster as a cofactor.

The catalysed reaction is chlorophyllide a + oxidized 2[4Fe-4S]-[ferredoxin] + 2 ADP + 2 phosphate = protochlorophyllide a + reduced 2[4Fe-4S]-[ferredoxin] + 2 ATP + 2 H2O. It functions in the pathway porphyrin-containing compound metabolism; bacteriochlorophyll biosynthesis (light-independent). Component of the dark-operative protochlorophyllide reductase (DPOR) that uses Mg-ATP and reduced ferredoxin to reduce ring D of protochlorophyllide (Pchlide) to form chlorophyllide a (Chlide). This reaction is light-independent. The NB-protein (BchN-BchB) is the catalytic component of the complex. This is Light-independent protochlorophyllide reductase subunit N from Roseiflexus sp. (strain RS-1).